Consider the following 266-residue polypeptide: Putative carbamate hydrolase RutD (266 aa).

Residues 14-119 (PVVVLSAGLG…LVNGWLSLSP (106 aa)) enclose the AB hydrolase-1 domain.

It belongs to the AB hydrolase superfamily. Hydrolase RutD family.

It carries out the reaction carbamate + 2 H(+) = NH4(+) + CO2. Its function is as follows. Involved in pyrimidine catabolism. May facilitate the hydrolysis of carbamate, a reaction that can also occur spontaneously. The polypeptide is Putative carbamate hydrolase RutD (Klebsiella pneumoniae subsp. pneumoniae (strain ATCC 700721 / MGH 78578)).